Consider the following 444-residue polypeptide: Serine carboxypeptidase-like 50 (444 aa).

Residues 1–22 (MEQATTLFILLSTLLLAVSVES) form the signal peptide. A disulfide bond links Cys79 and Cys308. Ser170 is a catalytic residue. An N-linked (GlcNAc...) asparagine glycan is attached at Asn263. Residue Asp345 is part of the active site. Asn361 carries an N-linked (GlcNAc...) asparagine glycan. Residue His403 is part of the active site.

Belongs to the peptidase S10 family. As to expression, ubiquitous.

It localises to the secreted. Probable carboxypeptidase. The polypeptide is Serine carboxypeptidase-like 50 (SCPL50) (Arabidopsis thaliana (Mouse-ear cress)).